A 303-amino-acid polypeptide reads, in one-letter code: MVRSDNDTWDLASSVGATATMVAAGRAVVSQDPGGLINDPFAAPLVRAVGIEALTMLADGKFDIEKVLPESAARVRANIDEMAVRTKFFDDYFMDATGRGVGQAVILASGLDSRAYRLPWPDGTVVYEIDQPDVIEFKTRTLADLGAEPTCERRTVSIDLRDDWPAALRAAGFDPSAPTAWCAEGLLIYLPPEAQDKLFDDIHHLSAPGSTVATEFVPALKDFDPEKARQATETLTRMGVDIDMPSLIYHGERHSASDYLETKGWQMDSAARATLFTRYGLPAPGHDDDDPLGEIIYISGTLR.

S-adenosyl-L-methionine-binding positions include Asp-130 and 159–160 (DL).

It belongs to the UPF0677 family.

In terms of biological role, exhibits S-adenosyl-L-methionine-dependent methyltransferase activity. In Mycolicibacterium smegmatis (strain ATCC 700084 / mc(2)155) (Mycobacterium smegmatis), this protein is Putative S-adenosyl-L-methionine-dependent methyltransferase MSMEG_1479/MSMEI_1443.